Consider the following 412-residue polypeptide: Transcription factor NIGT1 (412 aa).

3 disordered regions span residues 54-241 (MDAA…RCWA), 286-310 (KYRLHTRRPSSTGQSSAAAGVPAPP), and 358-412 (AMLP…TTSA). Basic and acidic residues predominate over residues 90-112 (ESTHADAAKSGKKEEAETSERHS). Positions 183 to 193 (ASSTTAAASST) are enriched in low complexity. Basic and acidic residues predominate over residues 198-228 (SGDKPTDDDTEKHMETDKDNDKDAKDKDKEG). The 61-residue stretch at 232 to 292 (PHRKPRRCWA…HLQKYRLHTR (61 aa)) folds into the HTH myb-type domain. A DNA-binding region (H-T-H motif) is located at residues 263-288 (PKQIRELMKVDGLTNDEVKSHLQKYR). Positions 383–392 (SGSEGRRSGD) are enriched in basic and acidic residues. Over residues 395 to 412 (DGSSSSPAVSSSSQTTSA) the composition is skewed to low complexity.

The protein resides in the nucleus. Transcriptional repressor that may play a role in response to nitrogen. May be involved in a time-dependent signaling for transcriptional regulation of nitrate-responsive genes. Binds specifically to the DNA sequence motif 5'-GAATC-3' or 5'-GAATATTC-3'. Represses the activity of its own promoter trough binding to these motifs. This is Transcription factor NIGT1 from Oryza sativa subsp. japonica (Rice).